The chain runs to 350 residues: Ketol-acid reductoisomerase (NADP(+)) (350 aa).

A KARI N-terminal Rossmann domain is found at 4-187; that stretch reads VSITTDYSRM…GGARANIIKT (184 aa). Residues 30–33, Arg53, Thr58, and 88–91 contribute to the NADP(+) site; these read YGSQ and DMVQ. The active site involves His113. Gly139 lines the NADP(+) pocket. Residues 188-333 enclose the KARI C-terminal knotted domain; the sequence is TFKEETETDL…KQLRAKMVWL (146 aa). 4 residues coordinate Mg(2+): Asp196, Glu200, Glu232, and Glu236. Residue Ser257 coordinates substrate.

The protein belongs to the ketol-acid reductoisomerase family. Requires Mg(2+) as cofactor.

The enzyme catalyses (2R)-2,3-dihydroxy-3-methylbutanoate + NADP(+) = (2S)-2-acetolactate + NADPH + H(+). It catalyses the reaction (2R,3R)-2,3-dihydroxy-3-methylpentanoate + NADP(+) = (S)-2-ethyl-2-hydroxy-3-oxobutanoate + NADPH + H(+). It participates in amino-acid biosynthesis; L-isoleucine biosynthesis; L-isoleucine from 2-oxobutanoate: step 2/4. It functions in the pathway amino-acid biosynthesis; L-valine biosynthesis; L-valine from pyruvate: step 2/4. In terms of biological role, involved in the biosynthesis of branched-chain amino acids (BCAA). Catalyzes an alkyl-migration followed by a ketol-acid reduction of (S)-2-acetolactate (S2AL) to yield (R)-2,3-dihydroxy-isovalerate. In the isomerase reaction, S2AL is rearranged via a Mg-dependent methyl migration to produce 3-hydroxy-3-methyl-2-ketobutyrate (HMKB). In the reductase reaction, this 2-ketoacid undergoes a metal-dependent reduction by NADPH to yield (R)-2,3-dihydroxy-isovalerate. In Xylella fastidiosa (strain Temecula1 / ATCC 700964), this protein is Ketol-acid reductoisomerase (NADP(+)).